Reading from the N-terminus, the 394-residue chain is S-adenosylmethionine synthase (394 aa).

Residue His-16 participates in ATP binding. Asp-18 provides a ligand contact to Mg(2+). Glu-44 is a K(+) binding site. L-methionine-binding residues include Glu-57 and Gln-100. A flexible loop region spans residues 100 to 110 (QSPDIAQGVDA). ATP is bound by residues 172–174 (DAK), 239–240 (RF), Asp-248, 254–255 (RK), Ala-271, and Lys-275. Residue Asp-248 coordinates L-methionine. Lys-279 provides a ligand contact to L-methionine.

The protein belongs to the AdoMet synthase family. As to quaternary structure, homotetramer; dimer of dimers. Mg(2+) serves as cofactor. It depends on K(+) as a cofactor.

Its subcellular location is the cytoplasm. It catalyses the reaction L-methionine + ATP + H2O = S-adenosyl-L-methionine + phosphate + diphosphate. Its pathway is amino-acid biosynthesis; S-adenosyl-L-methionine biosynthesis; S-adenosyl-L-methionine from L-methionine: step 1/1. Its function is as follows. Catalyzes the formation of S-adenosylmethionine (AdoMet) from methionine and ATP. The overall synthetic reaction is composed of two sequential steps, AdoMet formation and the subsequent tripolyphosphate hydrolysis which occurs prior to release of AdoMet from the enzyme. The polypeptide is S-adenosylmethionine synthase (Enterococcus faecalis (strain ATCC 700802 / V583)).